Here is a 434-residue protein sequence, read N- to C-terminus: Tyrosine-protein phosphatase non-receptor type 1 (434 aa).

One can recognise a Tyrosine-protein phosphatase domain in the interval I3 to G277. S50 bears the Phosphoserine mark. Residues D181, C215–R221, and Q262 each bind substrate. C215 functions as the Phosphocysteine intermediate in the catalytic mechanism. The tract at residues W291–M319 is disordered.

This sequence belongs to the protein-tyrosine phosphatase family. Non-receptor class 1 subfamily. In terms of assembly, interacts with EPHA3 (phosphorylated); dephosphorylates EPHA3 and may regulate its trafficking and function. Interacts with MET. Interacts with NCK1. Phosphorylated on serine and threonine residues near the N-terminus by casein kinase II (CK2).

The protein localises to the endoplasmic reticulum membrane. It carries out the reaction O-phospho-L-tyrosyl-[protein] + H2O = L-tyrosyl-[protein] + phosphate. May play an important role in CKII- and p60c-src-induced signal transduction cascades. May regulate the EFNA5-EPHA3 signaling pathway which modulates cell reorganization and cell-cell repulsion. May also regulate the hepatocyte growth factor receptor signaling pathway through dephosphorylation of MET. This chain is Tyrosine-protein phosphatase non-receptor type 1 (PTPN1), found in Gallus gallus (Chicken).